Consider the following 196-residue polypeptide: Elongation factor Ts (196 aa).

The segment at 80 to 83 is involved in Mg(2+) ion dislocation from EF-Tu; sequence TDFV.

The protein belongs to the EF-Ts family.

It localises to the cytoplasm. Functionally, associates with the EF-Tu.GDP complex and induces the exchange of GDP to GTP. It remains bound to the aminoacyl-tRNA.EF-Tu.GTP complex up to the GTP hydrolysis stage on the ribosome. The sequence is that of Elongation factor Ts from Desulfotalea psychrophila (strain LSv54 / DSM 12343).